We begin with the raw amino-acid sequence, 20 residues long: Unknown protein NF007 from 2D-PAGE (20 aa).

This Naegleria fowleri (Brain eating amoeba) protein is Unknown protein NF007 from 2D-PAGE.